A 287-amino-acid chain; its full sequence is ATP phosphoribosyltransferase (287 aa).

It belongs to the ATP phosphoribosyltransferase family. Long subfamily. As to quaternary structure, equilibrium between an active dimeric form, an inactive hexameric form and higher aggregates. Interconversion between the various forms is largely reversible and is influenced by the natural substrates and inhibitors of the enzyme. Mg(2+) serves as cofactor.

Its subcellular location is the cytoplasm. It carries out the reaction 1-(5-phospho-beta-D-ribosyl)-ATP + diphosphate = 5-phospho-alpha-D-ribose 1-diphosphate + ATP. It participates in amino-acid biosynthesis; L-histidine biosynthesis; L-histidine from 5-phospho-alpha-D-ribose 1-diphosphate: step 1/9. Its activity is regulated as follows. Feedback inhibited by histidine. Functionally, catalyzes the condensation of ATP and 5-phosphoribose 1-diphosphate to form N'-(5'-phosphoribosyl)-ATP (PR-ATP). Has a crucial role in the pathway because the rate of histidine biosynthesis seems to be controlled primarily by regulation of HisG enzymatic activity. This Mycobacterium leprae (strain TN) protein is ATP phosphoribosyltransferase (hisG).